Consider the following 568-residue polypeptide: Urease subunit alpha (568 aa).

A Urease domain is found at 129-568 (GAIDSHIHFI…LPMAQRYFLF (440 aa)). Ni(2+) is bound by residues His134, His136, and Lys217. Residue Lys217 is modified to N6-carboxylysine. Position 219 (His219) interacts with substrate. Ni(2+)-binding residues include His246 and His272. His320 acts as the Proton donor in catalysis. A Ni(2+)-binding site is contributed by Asp360.

Belongs to the metallo-dependent hydrolases superfamily. Urease alpha subunit family. As to quaternary structure, heterotrimer of UreA (gamma), UreB (beta) and UreC (alpha) subunits. Three heterotrimers associate to form the active enzyme. Ni cation is required as a cofactor. In terms of processing, carboxylation allows a single lysine to coordinate two nickel ions.

It localises to the cytoplasm. The catalysed reaction is urea + 2 H2O + H(+) = hydrogencarbonate + 2 NH4(+). It functions in the pathway nitrogen metabolism; urea degradation; CO(2) and NH(3) from urea (urease route): step 1/1. This Saccharophagus degradans (strain 2-40 / ATCC 43961 / DSM 17024) protein is Urease subunit alpha.